We begin with the raw amino-acid sequence, 395 residues long: Ankyrin repeat domain-containing protein 65 (395 aa).

ANK repeat units lie at residues 52 to 81 (QAWGHLLQAVWKGHTGLVTQLLRQGASVEE), 85 to 114 (AGRTPLHLAVLRGHVSLVRLLLQRGAQVGA), 118 to 147 (AGRTPLHEAAWHGPSRVAELLLRRGAPANA), 151 to 180 (AGLTPLHWAAALGRTLMVGHLLAAPHPGPT), 185 to 212 (RGWTAGHWAAAGGQMAVLELLGANGGAR), 213 to 241 (LDSVLLVAAAAGRATALRLLLAQGAPVDA), 245 to 274 (VGATVLGVAAGLGRRQDMEVLLEHGADPSL), 278 to 307 (HGRSALHRAAAGGHLLAVQLLAAWGAEVDS), 311 to 340 (LGLTPLHHAARGGHIEVTGHLLDRGAEINA), and 344 to 373 (LHKTPLHLAMEHGHGPTAELLLSRGASPTL).

The protein is Ankyrin repeat domain-containing protein 65 (ANKRD65) of Bos taurus (Bovine).